We begin with the raw amino-acid sequence, 615 residues long: Dihydroxy-acid dehydratase (615 aa).

Position 81 (Asp81) interacts with Mg(2+). Cys122 is a binding site for [2Fe-2S] cluster. Mg(2+)-binding residues include Asp123 and Lys124. Lys124 carries the N6-carboxylysine modification. Cys195 is a binding site for [2Fe-2S] cluster. A Mg(2+)-binding site is contributed by Glu491. The Proton acceptor role is filled by Ser517.

It belongs to the IlvD/Edd family. As to quaternary structure, homodimer. It depends on [2Fe-2S] cluster as a cofactor. Requires Mg(2+) as cofactor.

It catalyses the reaction (2R)-2,3-dihydroxy-3-methylbutanoate = 3-methyl-2-oxobutanoate + H2O. The enzyme catalyses (2R,3R)-2,3-dihydroxy-3-methylpentanoate = (S)-3-methyl-2-oxopentanoate + H2O. It functions in the pathway amino-acid biosynthesis; L-isoleucine biosynthesis; L-isoleucine from 2-oxobutanoate: step 3/4. The protein operates within amino-acid biosynthesis; L-valine biosynthesis; L-valine from pyruvate: step 3/4. In terms of biological role, functions in the biosynthesis of branched-chain amino acids. Catalyzes the dehydration of (2R,3R)-2,3-dihydroxy-3-methylpentanoate (2,3-dihydroxy-3-methylvalerate) into 2-oxo-3-methylpentanoate (2-oxo-3-methylvalerate) and of (2R)-2,3-dihydroxy-3-methylbutanoate (2,3-dihydroxyisovalerate) into 2-oxo-3-methylbutanoate (2-oxoisovalerate), the penultimate precursor to L-isoleucine and L-valine, respectively. The chain is Dihydroxy-acid dehydratase from Shewanella pealeana (strain ATCC 700345 / ANG-SQ1).